The chain runs to 644 residues: Exoribonuclease 2 (644 aa).

An RNB domain is found at 189 to 516 (RRDLTALNFV…NHRLLKAIVK (328 aa)). The S1 motif domain occupies 561 to 643 (DTRFAAEIID…ETRSIIARPV (83 aa)).

This sequence belongs to the RNR ribonuclease family. RNase II subfamily.

The protein localises to the cytoplasm. The catalysed reaction is Exonucleolytic cleavage in the 3'- to 5'-direction to yield nucleoside 5'-phosphates.. In terms of biological role, involved in mRNA degradation. Hydrolyzes single-stranded polyribonucleotides processively in the 3' to 5' direction. This chain is Exoribonuclease 2, found in Enterobacter sp. (strain 638).